The following is a 129-amino-acid chain: Histone H2A-III (129 aa).

The tract at residues 1–22 (MSGRGKQGGKARAKAKSRSSRA) is disordered. Position 2 is an N-acetylserine (S2). A Phosphoserine modification is found at S2. An N6-(2-hydroxyisobutyryl)lysine modification is found at K6. N6-acetyllysine is present on residues K6 and K10. Over residues 7 to 19 (QGGKARAKAKSRS) the composition is skewed to basic residues. Residue K10 is modified to N6-(2-hydroxyisobutyryl)lysine; alternate. Position 10 is an N6-lactoyllysine; alternate (K10). K10 carries the post-translational modification N6-succinyllysine. Residues K14 and K16 each participate in a glycyl lysine isopeptide (Lys-Gly) (interchain with G-Cter in ubiquitin) cross-link. N6-(2-hydroxyisobutyryl)lysine; alternate is present on K37. 2 positions are modified to N6-(2-hydroxyisobutyryl)lysine: K75 and K76. Residue K96 is modified to N6-(2-hydroxyisobutyryl)lysine; alternate. K96 carries the N6-succinyllysine modification. K96 carries the N6-glutaryllysine; alternate modification. At K100 the chain carries N6-glutaryllysine. Q105 carries the N5-methylglutamine modification. K119 bears the N6-(2-hydroxyisobutyryl)lysine; alternate mark. N6-glutaryllysine; alternate is present on residues K119 and K120. K120 is covalently cross-linked (Glycyl lysine isopeptide (Lys-Gly) (interchain with G-Cter in ubiquitin)).

Belongs to the histone H2A family. In terms of assembly, the nucleosome is a histone octamer containing two molecules each of H2A, H2B, H3 and H4 assembled in one H3-H4 heterotetramer and two H2A-H2B heterodimers. The octamer wraps approximately 147 bp of DNA. In terms of processing, monoubiquitination of Lys-120 (H2AK119Ub) gives a specific tag for epigenetic transcriptional repression. Following DNA double-strand breaks (DSBs), it is ubiquitinated through 'Lys-63' linkage of ubiquitin moieties, leading to the recruitment of repair proteins to sites of DNA damage. H2AK119Ub and ionizing radiation-induced 'Lys-63'-linked ubiquitination are distinct events. Phosphorylation on Ser-2 is enhanced during mitosis. Phosphorylation on Ser-2 directly represses transcription. Post-translationally, glutamine methylation at Gln-105 (H2AQ104me) by FBL is specifically dedicated to polymerase I. It is present at 35S ribosomal DNA locus and impairs binding of the FACT complex.

It localises to the nucleus. The protein localises to the chromosome. Functionally, core component of nucleosome. Nucleosomes wrap and compact DNA into chromatin, limiting DNA accessibility to the cellular machineries which require DNA as a template. Histones thereby play a central role in transcription regulation, DNA repair, DNA replication and chromosomal stability. DNA accessibility is regulated via a complex set of post-translational modifications of histones, also called histone code, and nucleosome remodeling. This chain is Histone H2A-III, found in Gallus gallus (Chicken).